The following is a 124-amino-acid chain: Small ribosomal subunit protein bS16 (124 aa).

The span at 84–110 (EKAERKNLKKGEPGKAAKERAEKRAAR) shows a compositional bias: basic and acidic residues. Positions 84–124 (EKAERKNLKKGEPGKAAKERAEKRAAREAAANAPAEEAASE) are disordered. The span at 111–124 (EAAANAPAEEAASE) shows a compositional bias: low complexity.

It belongs to the bacterial ribosomal protein bS16 family.

The protein is Small ribosomal subunit protein bS16 of Paracoccus denitrificans (strain Pd 1222).